The following is a 527-amino-acid chain: Tubulin-specific chaperone E (527 aa).

An N-acetylserine modification is found at Ser2. The region spanning 27–71 (GVVPPVAGPWLGVEWDNPERGKHDGSHEGTVYFKCRHPTGGSFIR) is the CAP-Gly domain. LRR repeat units lie at residues 154 to 175 (NIRK…IHIA), 180 to 200 (HLEV…SVLT), 205 to 226 (VLKV…RCVA), 230 to 252 (GLEE…DVLQ), 253 to 274 (TVKL…YLIA), 278 to 299 (RLEQ…DAGI), and 308 to 329 (SLKY…NELE). The LRRCT domain maps to 342–384 (NPLTKEDKEAETARLLIIASIGQLKTLNKCEILPEERRRAELD). At Lys463 the chain carries N6-acetyllysine. Ser495 carries the phosphoserine modification.

The protein belongs to the TBCE family. In terms of assembly, supercomplex made of cofactors A to E. Cofactors A and D function by capturing and stabilizing tubulin in a quasi-native conformation. Cofactor E binds to the cofactor D-tubulin complex; interaction with cofactor C then causes the release of tubulin polypeptides that are committed to the native state. Cofactors B and E can form a heterodimer which binds to alpha-tubulin and enhances their ability to dissociate tubulin heterodimers. Interacts with TBCD.

Its subcellular location is the cytoplasm. It localises to the cytoskeleton. Tubulin-folding protein; involved in the second step of the tubulin folding pathway and in the regulation of tubulin heterodimer dissociation. Required for correct organization of microtubule cytoskeleton and mitotic splindle, and maintenance of the neuronal microtubule network. The protein is Tubulin-specific chaperone E (TBCE) of Homo sapiens (Human).